The primary structure comprises 443 residues: Monooxygenase asqM (443 aa).

Belongs to the aromatic-ring hydroxylase family. It depends on FAD as a cofactor.

It participates in secondary metabolite biosynthesis. Its pathway is alkaloid biosynthesis. The protein operates within mycotoxin biosynthesis. In terms of biological role, monooxygenase; part of the gene cluster that mediates the biosynthesis of the aspoquinolone mycotoxins. The role of asqM within the aspoquinolone pathway has still to be determined. The first step of the pathway is catalyzed by the nonribosomal peptide synthetase asqK that condenses anthranilic acid and O-methyl-L-tyrosine to produce 4'-methoxycyclopeptin. 4'-methoxycyclopeptin is then converted to 4'-methoxydehydrocyclopeptin by the ketoglutarate-dependent dioxygenase asqJ. AsqJ also converts its first product 4'-methoxydehydrocyclopeptin to 4'-methoxycyclopenin. The following conversion of 4'-methoxycyclopenin into 4'-methoxyviridicatin is catalyzed by the cyclopenase asqI. 4'-methoxyviridicatin is the precursor of quinolone natural products, and is further converted to quinolinone B. The prenyltransferase asqH1 then catalyzes the canonical Friedel-Crafts alkylation of quinolinone B with dimethylallyl cation to yield dimethylallyl quinolone, which is subjected to FAD-dependent dehydrogenation by the FAD-linked oxidoreductase asqF to yield conjugated aryl diene. The delta(3') double bond then serves as the site of the second alkylation with DMAPP catalyzed by the prenyltransferase asqH2 to yield a carbenium ion intermediate, which can be attacked by H(2)O to yield a styrenyl quinolone containing a C3'-hydroxyprenyl chain. The FAD-dependent monooxygenase asqG performs epoxidation of the terminal C7'-C8' olefin. Finally, after dehydratation of the epoxide at C3 by asqC, the quinolone epoxide rearrangement protein asqO catalyzes an enzymatic 3-exo-tet cyclization to yield the cyclopropyl-THF ring system in aspoquinolone. The sequence is that of Monooxygenase asqM from Emericella nidulans (strain FGSC A4 / ATCC 38163 / CBS 112.46 / NRRL 194 / M139) (Aspergillus nidulans).